A 303-amino-acid polypeptide reads, in one-letter code: MEDYVKIEKIGEGTYGVVYKGRHKSTGQVVAMKKIRLESEEEGVPSTAVREVSLLQELKHPNVVRLLDVLMQESRLYLIFEFLSMDLKKYLDSIPSGQYMDPMLVKSYLYQILEGIYFCHRRRVLHRDLKPQNLLIDNKGVIKLADFGLARAFGVPVRVYTHEVVTLWYRAPEVLLGSPRYSTPVDVWSTGTIFAELATKKPLFHGDSEIDQLFRIFRTLGTPNNDVWPDVESLPDYKNTFPKWMEGSLSSMVKNLDKNGLDLLAKMLIYNPPKRISAREAMTHPYFDDLDKSTLPAACINGV.

The region spanning 4–287 (YVKIEKIGEG…AREAMTHPYF (284 aa)) is the Protein kinase domain. ATP is bound by residues 10–18 (IGEGTYGVV) and K33. Residue T14 is modified to Phosphothreonine. Y15 is modified (phosphotyrosine; by wee1 and wee2). The active-site Proton acceptor is the D128. T161 is modified (phosphothreonine; by cak).

The protein belongs to the protein kinase superfamily. CMGC Ser/Thr protein kinase family. CDC2/CDKX subfamily. As to quaternary structure, forms a stable but non-covalent complex with cyclin B in mature oocytes. Phosphorylation at Tyr-15 by wee1 and wee2 inhibits the protein kinase activity and acts negative regulator of entry into mitosis (G2 to M transition).

It is found in the nucleus. The protein localises to the cytoplasm. The protein resides in the cytoskeleton. It localises to the microtubule organizing center. Its subcellular location is the centrosome. The enzyme catalyses L-seryl-[protein] + ATP = O-phospho-L-seryl-[protein] + ADP + H(+). It catalyses the reaction L-threonyl-[protein] + ATP = O-phospho-L-threonyl-[protein] + ADP + H(+). It carries out the reaction [DNA-directed RNA polymerase] + ATP = phospho-[DNA-directed RNA polymerase] + ADP + H(+). With respect to regulation, phosphorylation at Thr-14 or Tyr-15 inactivates the enzyme, while phosphorylation at Thr-161 activates it. Plays a key role in the control of the eukaryotic cell cycle by modulating the centrosome cycle as well as mitotic onset; promotes G2-M transition via association with multiple interphase cyclins. During G2 and early mitosis, CDC25A/B/C-mediated dephosphorylation activates CDK1/cyclin complexes which phosphorylate several substrates that trigger at least centrosome separation, Golgi dynamics, nuclear envelope breakdown and chromosome condensation. Once chromosomes are condensed and aligned at the metaphase plate, CDK1 activity is switched off by WEE1- and PKMYT1-mediated phosphorylation to allow sister chromatid separation, chromosome decondensation, reformation of the nuclear envelope and cytokinesis. Catalyzes lamin (LMNA, LMNB1 and LMNB2) phosphorylation at the onset of mitosis, promoting nuclear envelope breakdown. This Oryzias javanicus (Javanese ricefish) protein is Cyclin-dependent kinase 1 (cdk1).